Here is a 188-residue protein sequence, read N- to C-terminus: dTTP/UTP pyrophosphatase (188 aa).

The active-site Proton acceptor is Asp-70.

The protein belongs to the Maf family. YhdE subfamily. A divalent metal cation serves as cofactor.

It is found in the cytoplasm. It catalyses the reaction dTTP + H2O = dTMP + diphosphate + H(+). The enzyme catalyses UTP + H2O = UMP + diphosphate + H(+). Functionally, nucleoside triphosphate pyrophosphatase that hydrolyzes dTTP and UTP. May have a dual role in cell division arrest and in preventing the incorporation of modified nucleotides into cellular nucleic acids. The protein is dTTP/UTP pyrophosphatase of Clostridium beijerinckii (strain ATCC 51743 / NCIMB 8052) (Clostridium acetobutylicum).